The sequence spans 105 residues: ATP synthase F(0) complex subunit a (105 aa).

3 helical membrane passes run 14 to 34 (EGTP…SLFI), 47 to 67 (LTAG…LLPM), and 72 to 92 (AILT…VAMI).

Belongs to the ATPase A chain family. Component of the ATP synthase complex composed at least of ATP5F1A/subunit alpha, ATP5F1B/subunit beta, ATP5MC1/subunit c (homooctomer), MT-ATP6/subunit a, MT-ATP8/subunit 8, ATP5ME/subunit e, ATP5MF/subunit f, ATP5MG/subunit g, ATP5MK/subunit k, ATP5MJ/subunit j, ATP5F1C/subunit gamma, ATP5F1D/subunit delta, ATP5F1E/subunit epsilon, ATP5PF/subunit F6, ATP5PB/subunit b, ATP5PD/subunit d, ATP5PO/subunit OSCP. ATP synthase complex consists of a soluble F(1) head domain (subunits alpha(3) and beta(3)) - the catalytic core - and a membrane F(0) domain - the membrane proton channel (subunits c, a, 8, e, f, g, k and j). These two domains are linked by a central stalk (subunits gamma, delta, and epsilon) rotating inside the F1 region and a stationary peripheral stalk (subunits F6, b, d, and OSCP). Interacts with DNAJC30; interaction is direct.

Its subcellular location is the mitochondrion inner membrane. It catalyses the reaction H(+)(in) = H(+)(out). Subunit a, of the mitochondrial membrane ATP synthase complex (F(1)F(0) ATP synthase or Complex V) that produces ATP from ADP in the presence of a proton gradient across the membrane which is generated by electron transport complexes of the respiratory chain. ATP synthase complex consist of a soluble F(1) head domain - the catalytic core - and a membrane F(1) domain - the membrane proton channel. These two domains are linked by a central stalk rotating inside the F(1) region and a stationary peripheral stalk. During catalysis, ATP synthesis in the catalytic domain of F(1) is coupled via a rotary mechanism of the central stalk subunits to proton translocation. With the subunit c (ATP5MC1), forms the proton-conducting channel in the F(0) domain, that contains two crucial half-channels (inlet and outlet) that facilitate proton movement from the mitochondrial intermembrane space (IMS) into the matrix. Protons are taken up via the inlet half-channel and released through the outlet half-channel, following a Grotthuss mechanism. In Salmo trutta (Brown trout), this protein is ATP synthase F(0) complex subunit a.